A 392-amino-acid chain; its full sequence is MTSNRMQTGHPADGVYFGLMSGTSMDGVDGIAVRFEAGKPPAVLSEAFVGFADTLRDALFALQQPGDDEIEREALAANALAARYAVCCHELLRTAGLSPDDVRALGVHGQTVRHRPERGYTRQLNNAALLAELTRIDVIADFRSRDVAAGGQGAPLVPAFHATVFGSPDETRVVCNLGGISNITILPAGGGPQGEGHARNDTVRGHDCGPANALIDAWVERHLKQPFDDGGRFAARGKVDETLLAALLDEPYFRQNAPKSTGRDLFNADWLDAKLAGFQHLAPENVQATLTALTAATVADEIARHAGDCRAVYVCGGGARNPVLLDALATALAARGLDAAVATTAALGVPPQQVESLAFAWLAYRFNARAPGNVSTVTGAAGERVLGALYPR.

22–29 (GTSMDGVD) lines the ATP pocket.

It belongs to the anhydro-N-acetylmuramic acid kinase family.

It carries out the reaction 1,6-anhydro-N-acetyl-beta-muramate + ATP + H2O = N-acetyl-D-muramate 6-phosphate + ADP + H(+). Its pathway is amino-sugar metabolism; 1,6-anhydro-N-acetylmuramate degradation. The protein operates within cell wall biogenesis; peptidoglycan recycling. Its function is as follows. Catalyzes the specific phosphorylation of 1,6-anhydro-N-acetylmuramic acid (anhMurNAc) with the simultaneous cleavage of the 1,6-anhydro ring, generating MurNAc-6-P. Is required for the utilization of anhMurNAc either imported from the medium or derived from its own cell wall murein, and thus plays a role in cell wall recycling. In Burkholderia pseudomallei (strain 1106a), this protein is Anhydro-N-acetylmuramic acid kinase.